Consider the following 608-residue polypeptide: Threonine--tRNA ligase (608 aa).

An editing domain region spans residues Met-1–Glu-143. 2 catalytic regions span residues Pro-194–Pro-490 and Lys-195–Pro-490. 3 residues coordinate Zn(2+): Cys-287, His-338, and His-459.

Belongs to the class-II aminoacyl-tRNA synthetase family. As to quaternary structure, homodimer. Requires Zn(2+) as cofactor.

Its subcellular location is the cytoplasm. The catalysed reaction is tRNA(Thr) + L-threonine + ATP = L-threonyl-tRNA(Thr) + AMP + diphosphate + H(+). Its function is as follows. Catalyzes the attachment of threonine to tRNA(Thr) in a two-step reaction: L-threonine is first activated by ATP to form Thr-AMP and then transferred to the acceptor end of tRNA(Thr). Also edits incorrectly charged L-seryl-tRNA(Thr). The protein is Threonine--tRNA ligase of Pyrobaculum arsenaticum (strain DSM 13514 / JCM 11321 / PZ6).